A 167-amino-acid chain; its full sequence is NADH-quinone oxidoreductase subunit B (167 aa).

Positions 48, 49, 113, and 143 each coordinate [4Fe-4S] cluster.

The protein belongs to the complex I 20 kDa subunit family. NDH-1 is composed of 14 different subunits. Subunits NuoB, C, D, E, F, and G constitute the peripheral sector of the complex. [4Fe-4S] cluster serves as cofactor.

The protein localises to the cell membrane. It carries out the reaction a quinone + NADH + 5 H(+)(in) = a quinol + NAD(+) + 4 H(+)(out). Functionally, NDH-1 shuttles electrons from NADH, via FMN and iron-sulfur (Fe-S) centers, to quinones in the respiratory chain. Couples the redox reaction to proton translocation (for every two electrons transferred, four hydrogen ions are translocated across the cytoplasmic membrane), and thus conserves the redox energy in a proton gradient. The sequence is that of NADH-quinone oxidoreductase subunit B from Wolbachia pipientis subsp. Culex pipiens (strain wPip).